A 124-amino-acid chain; its full sequence is Small ribosomal subunit protein uS12 (124 aa).

D89 is subject to 3-methylthioaspartic acid.

The protein belongs to the universal ribosomal protein uS12 family. As to quaternary structure, part of the 30S ribosomal subunit. Contacts proteins S8 and S17. May interact with IF1 in the 30S initiation complex.

In terms of biological role, with S4 and S5 plays an important role in translational accuracy. Functionally, interacts with and stabilizes bases of the 16S rRNA that are involved in tRNA selection in the A site and with the mRNA backbone. Located at the interface of the 30S and 50S subunits, it traverses the body of the 30S subunit contacting proteins on the other side and probably holding the rRNA structure together. The combined cluster of proteins S8, S12 and S17 appears to hold together the shoulder and platform of the 30S subunit. This chain is Small ribosomal subunit protein uS12, found in Aliivibrio fischeri (strain ATCC 700601 / ES114) (Vibrio fischeri).